The sequence spans 475 residues: 3-isopropylmalate dehydratase large subunit (475 aa).

[4Fe-4S] cluster contacts are provided by Cys-353, Cys-414, and Cys-417.

It belongs to the aconitase/IPM isomerase family. LeuC type 1 subfamily. Heterodimer of LeuC and LeuD. Requires [4Fe-4S] cluster as cofactor.

It catalyses the reaction (2R,3S)-3-isopropylmalate = (2S)-2-isopropylmalate. The protein operates within amino-acid biosynthesis; L-leucine biosynthesis; L-leucine from 3-methyl-2-oxobutanoate: step 2/4. Its function is as follows. Catalyzes the isomerization between 2-isopropylmalate and 3-isopropylmalate, via the formation of 2-isopropylmaleate. The polypeptide is 3-isopropylmalate dehydratase large subunit (Ectopseudomonas mendocina (strain ymp) (Pseudomonas mendocina)).